Here is a 282-residue protein sequence, read N- to C-terminus: Heme oxygenase 1, chloroplastic (282 aa).

The N-terminal 54 residues, 1 to 54, are a transit peptide targeting the chloroplast; the sequence is MAYLAPISSSLSIFKNPQLSRFQFSSSSPNPLFLRPRIQILSMTMNKSPSLVVV. His-86 is a heme b binding site.

It belongs to the heme oxygenase family. In terms of tissue distribution, widely expressed.

Its subcellular location is the plastid. It is found in the chloroplast. It carries out the reaction heme b + 3 reduced [NADPH--hemoprotein reductase] + 3 O2 = biliverdin IXalpha + CO + Fe(2+) + 3 oxidized [NADPH--hemoprotein reductase] + 3 H2O + H(+). Activated by ascorbate. Its function is as follows. Key enzyme in the synthesis of the chromophore of the phytochrome family of plant photoreceptors. Catalyzes the opening of the heme ring to form the open-chain tetrapyrrole biliverdin IX with the release of iron and carbon monoxide (CO). Produces specifically the biliverdin IX-alpha isomer. Can form complex with heme, is ferredoxin-dependent and its activity is increased in the presence of ascorbate. Plays a role in salt acclimation signaling. May affect the plastid-to-nucleus signaling pathway by perturbing tetrapyrrole synthesis. The plastid-to-nucleus signal plays an important role in the coordinated expression of both nuclear- and chloroplast-localized genes that encode photosynthesis-related proteins. This is Heme oxygenase 1, chloroplastic (HO1) from Arabidopsis thaliana (Mouse-ear cress).